We begin with the raw amino-acid sequence, 203 residues long: Outer-membrane lipoprotein carrier protein (203 aa).

Positions 1-21 (MKKLAITCALLSGMVVSQVWA) are cleaved as a signal peptide.

Belongs to the LolA family. Monomer.

It localises to the periplasm. Functionally, participates in the translocation of lipoproteins from the inner membrane to the outer membrane. Only forms a complex with a lipoprotein if the residue after the N-terminal Cys is not an aspartate (The Asp acts as a targeting signal to indicate that the lipoprotein should stay in the inner membrane). This Klebsiella pneumoniae subsp. pneumoniae (strain ATCC 700721 / MGH 78578) protein is Outer-membrane lipoprotein carrier protein.